The primary structure comprises 218 residues: ATP phosphoribosyltransferase (218 aa).

Belongs to the ATP phosphoribosyltransferase family. Short subfamily. Heteromultimer composed of HisG and HisZ subunits.

It localises to the cytoplasm. It carries out the reaction 1-(5-phospho-beta-D-ribosyl)-ATP + diphosphate = 5-phospho-alpha-D-ribose 1-diphosphate + ATP. It functions in the pathway amino-acid biosynthesis; L-histidine biosynthesis; L-histidine from 5-phospho-alpha-D-ribose 1-diphosphate: step 1/9. Functionally, catalyzes the condensation of ATP and 5-phosphoribose 1-diphosphate to form N'-(5'-phosphoribosyl)-ATP (PR-ATP). Has a crucial role in the pathway because the rate of histidine biosynthesis seems to be controlled primarily by regulation of HisG enzymatic activity. In Burkholderia mallei (strain ATCC 23344), this protein is ATP phosphoribosyltransferase.